The sequence spans 404 residues: Cysteine desulfurase IscS (404 aa).

Residues 75–76, Asn155, Gln183, and 203–205 each bind pyridoxal 5'-phosphate; these read AT and TSH. Position 206 is an N6-(pyridoxal phosphate)lysine (Lys206). Thr243 serves as a coordination point for pyridoxal 5'-phosphate. Cys328 (cysteine persulfide intermediate) is an active-site residue. Cys328 provides a ligand contact to [2Fe-2S] cluster.

This sequence belongs to the class-V pyridoxal-phosphate-dependent aminotransferase family. NifS/IscS subfamily. As to quaternary structure, homodimer. Forms a heterotetramer with IscU, interacts with other sulfur acceptors. It depends on pyridoxal 5'-phosphate as a cofactor.

The protein resides in the cytoplasm. The enzyme catalyses (sulfur carrier)-H + L-cysteine = (sulfur carrier)-SH + L-alanine. It functions in the pathway cofactor biosynthesis; iron-sulfur cluster biosynthesis. Master enzyme that delivers sulfur to a number of partners involved in Fe-S cluster assembly, tRNA modification or cofactor biosynthesis. Catalyzes the removal of elemental sulfur atoms from cysteine to produce alanine. Functions as a sulfur delivery protein for Fe-S cluster synthesis onto IscU, an Fe-S scaffold assembly protein, as well as other S acceptor proteins. This is Cysteine desulfurase IscS from Photobacterium profundum (strain SS9).